A 455-amino-acid chain; its full sequence is Bifunctional protein GlmU (455 aa).

Residues 1-226 (MGLSVVILAA…EFEILGVNDR (226 aa)) are pyrophosphorylase. UDP-N-acetyl-alpha-D-glucosamine is bound by residues 8 to 11 (LAAG), Lys22, Gln73, 78 to 79 (GT), 99 to 101 (YGD), Gly136, Glu151, Asn166, and Asn224. Position 101 (Asp101) interacts with Mg(2+). Residue Asn224 participates in Mg(2+) binding. Residues 227–247 (TQLASLERVWQRNVAEKIMAK) are linker. Residues 248–455 (GVSIADPNRF…WQRPVKKTDK (208 aa)) form an N-acetyltransferase region. UDP-N-acetyl-alpha-D-glucosamine contacts are provided by Arg330 and Lys348. The active-site Proton acceptor is the His360. 2 residues coordinate UDP-N-acetyl-alpha-D-glucosamine: Tyr363 and Asn374. Acetyl-CoA is bound by residues Ala377, 383 to 384 (NY), Ser402, Ala420, and Arg437.

It in the N-terminal section; belongs to the N-acetylglucosamine-1-phosphate uridyltransferase family. In the C-terminal section; belongs to the transferase hexapeptide repeat family. Homotrimer. It depends on Mg(2+) as a cofactor.

Its subcellular location is the cytoplasm. It carries out the reaction alpha-D-glucosamine 1-phosphate + acetyl-CoA = N-acetyl-alpha-D-glucosamine 1-phosphate + CoA + H(+). The enzyme catalyses N-acetyl-alpha-D-glucosamine 1-phosphate + UTP + H(+) = UDP-N-acetyl-alpha-D-glucosamine + diphosphate. Its pathway is nucleotide-sugar biosynthesis; UDP-N-acetyl-alpha-D-glucosamine biosynthesis; N-acetyl-alpha-D-glucosamine 1-phosphate from alpha-D-glucosamine 6-phosphate (route II): step 2/2. It functions in the pathway nucleotide-sugar biosynthesis; UDP-N-acetyl-alpha-D-glucosamine biosynthesis; UDP-N-acetyl-alpha-D-glucosamine from N-acetyl-alpha-D-glucosamine 1-phosphate: step 1/1. It participates in bacterial outer membrane biogenesis; LPS lipid A biosynthesis. In terms of biological role, catalyzes the last two sequential reactions in the de novo biosynthetic pathway for UDP-N-acetylglucosamine (UDP-GlcNAc). The C-terminal domain catalyzes the transfer of acetyl group from acetyl coenzyme A to glucosamine-1-phosphate (GlcN-1-P) to produce N-acetylglucosamine-1-phosphate (GlcNAc-1-P), which is converted into UDP-GlcNAc by the transfer of uridine 5-monophosphate (from uridine 5-triphosphate), a reaction catalyzed by the N-terminal domain. The protein is Bifunctional protein GlmU of Francisella tularensis subsp. novicida (strain U112).